Consider the following 963-residue polypeptide: Iron-responsive element-binding protein 2 (963 aa).

[4Fe-4S] cluster contacts are provided by cysteine 512, cysteine 578, and cysteine 581.

The protein belongs to the aconitase/IPM isomerase family. In terms of assembly, interacts with RBCK1 only in iron-rich conditions. Interacts (when associated with the 4Fe-4S) with FBXL5. Interacts with CIAO1 and CIAO2A. It depends on [4Fe-4S] cluster as a cofactor. In terms of processing, ubiquitinated and degraded by the proteasome in presence of high level of iron and oxygen. Ubiquitinated by a SCF complex containing FBXL5. Upon iron and oxygen depletion FBXL5 is degraded, preventing ubiquitination and allowing its RNA-binding activity.

The protein localises to the cytoplasm. In terms of biological role, RNA-binding protein that binds to iron-responsive elements (IRES), which are stem-loop structures found in the 5'-UTR of ferritin, and delta aminolevulinic acid synthase mRNAs, and in the 3'-UTR of transferrin receptor mRNA. Binding to the IRE element in ferritin results in the repression of its mRNA translation. Binding of the protein to the transferrin receptor mRNA inhibits the degradation of this otherwise rapidly degraded mRNA. The protein is Iron-responsive element-binding protein 2 (Ireb2) of Mus musculus (Mouse).